The chain runs to 312 residues: Glyoxylate/hydroxypyruvate reductase A (312 aa).

Residue R227 is part of the active site. H275 functions as the Proton donor in the catalytic mechanism.

This sequence belongs to the D-isomer specific 2-hydroxyacid dehydrogenase family. GhrA subfamily.

It is found in the cytoplasm. It carries out the reaction glycolate + NADP(+) = glyoxylate + NADPH + H(+). The enzyme catalyses (R)-glycerate + NAD(+) = 3-hydroxypyruvate + NADH + H(+). The catalysed reaction is (R)-glycerate + NADP(+) = 3-hydroxypyruvate + NADPH + H(+). Catalyzes the NADPH-dependent reduction of glyoxylate and hydroxypyruvate into glycolate and glycerate, respectively. This chain is Glyoxylate/hydroxypyruvate reductase A, found in Salmonella choleraesuis (strain SC-B67).